The sequence spans 412 residues: Non-specific lipid-transfer protein-like 2 (412 aa).

The Microbody targeting signal signature appears at 410–412 (SKI).

The protein belongs to the thiolase-like superfamily. Thiolase family. Expressed in intestine, hypodermis and body-wall muscle.

It is found in the peroxisome. It catalyses the reaction choloyl-CoA + propanoyl-CoA = 3alpha,7alpha,12alpha-trihydroxy-24-oxo-5beta-cholestan-26-oyl-CoA + CoA. Inhibited by acetyl-CoA. Catalyzes the thiolytic cleavage of 3-ketoacyl-CoA with 8-16 carbon residues in the acyl group using a ping-pong mechanism whereby binding to 3-ketooctanoyl-CoA results in the release of acetyl-CoA and the subsequent addition of CoA produces 3-ketohexanohyl-CoA. Involved in the biosynthesis of the dauer pheromone by providing short chains of fatty acid that are attached to the ascarylose sugars of the pheromone. This is Non-specific lipid-transfer protein-like 2 from Caenorhabditis elegans.